We begin with the raw amino-acid sequence, 378 residues long: Cytochrome b (378 aa).

A run of 4 helical transmembrane segments spans residues 32 to 52 (FGSL…FLAM), 76 to 97 (WLIR…FLHV), 112 to 132 (WNIG…GYVL), and 177 to 197 (FFAF…VHLL). Heme b contacts are provided by His82 and His96. The heme b site is built by His181 and His195. His200 provides a ligand contact to a ubiquinone. The next 4 helical transmembrane spans lie at 225-245 (IKDA…VLFF), 287-307 (LGGV…PILH), 319-339 (LSQC…WIGG), and 346-366 (FITI…FALP).

This sequence belongs to the cytochrome b family. The cytochrome bc1 complex contains 11 subunits: 3 respiratory subunits (MT-CYB, CYC1 and UQCRFS1), 2 core proteins (UQCRC1 and UQCRC2) and 6 low-molecular weight proteins (UQCRH/QCR6, UQCRB/QCR7, UQCRQ/QCR8, UQCR10/QCR9, UQCR11/QCR10 and a cleavage product of UQCRFS1). This cytochrome bc1 complex then forms a dimer. Requires heme b as cofactor.

The protein localises to the mitochondrion inner membrane. Its function is as follows. Component of the ubiquinol-cytochrome c reductase complex (complex III or cytochrome b-c1 complex) that is part of the mitochondrial respiratory chain. The b-c1 complex mediates electron transfer from ubiquinol to cytochrome c. Contributes to the generation of a proton gradient across the mitochondrial membrane that is then used for ATP synthesis. The chain is Cytochrome b (MT-CYB) from Sciurus aberti (Abert's squirrel).